Here is a 158-residue protein sequence, read N- to C-terminus: uncharacterized protein (158 aa).

Polar residues predominate over residues 1–18 (MDLASEITSATQTSSLCS). Disordered stretches follow at residues 1 to 20 (MDLA…CSSG), 66 to 94 (LRDL…KPCL), and 111 to 158 (GSSG…GEEF). Over residues 72-90 (RGSTSSSRSPSRPVSTSAS) the composition is skewed to low complexity. Composition is skewed to polar residues over residues 111 to 120 (GSSGHLQSPG) and 149 to 158 (LSHSAQGEEF).

This is an uncharacterized protein from Homo sapiens (Human).